Consider the following 441-residue polypeptide: BTB/POZ domain-containing protein At3g05675 (441 aa).

The region spanning 20–98 is the BTB domain; the sequence is SDIVVRLRNE…LYVVSDDVHE (79 aa).

The protein operates within protein modification; protein ubiquitination. May act as a substrate-specific adapter of an E3 ubiquitin-protein ligase complex (CUL3-RBX1-BTB) which mediates the ubiquitination and subsequent proteasomal degradation of target proteins. The chain is BTB/POZ domain-containing protein At3g05675 from Arabidopsis thaliana (Mouse-ear cress).